A 238-amino-acid polypeptide reads, in one-letter code: tRNA (guanine-N(7)-)-methyltransferase (238 aa).

Residues glutamate 68, glutamate 93, aspartate 121, and aspartate 143 each coordinate S-adenosyl-L-methionine. The active site involves aspartate 143. Substrate contacts are provided by residues lysine 147, aspartate 179, and 216 to 219; that span reads TRYE.

Belongs to the class I-like SAM-binding methyltransferase superfamily. TrmB family.

The catalysed reaction is guanosine(46) in tRNA + S-adenosyl-L-methionine = N(7)-methylguanosine(46) in tRNA + S-adenosyl-L-homocysteine. The protein operates within tRNA modification; N(7)-methylguanine-tRNA biosynthesis. Functionally, catalyzes the formation of N(7)-methylguanine at position 46 (m7G46) in tRNA. This chain is tRNA (guanine-N(7)-)-methyltransferase, found in Paramagnetospirillum magneticum (strain ATCC 700264 / AMB-1) (Magnetospirillum magneticum).